The primary structure comprises 455 residues: tRNA modification GTPase MnmE (455 aa).

The (6S)-5-formyl-5,6,7,8-tetrahydrofolate site is built by R24, E81, and K120. A TrmE-type G domain is found at 216-378 (GMTVVIAGRP…LREHLKACMG (163 aa)). A K(+)-binding site is contributed by N226. GTP contacts are provided by residues 226 to 231 (NAGKSS), 245 to 251 (TDIAGTT), 270 to 273 (DTAG), 335 to 338 (NKAD), and 359 to 361 (SAR). S230 serves as a coordination point for Mg(2+). K(+) is bound by residues T245, I247, and T250. Residue T251 participates in Mg(2+) binding. (6S)-5-formyl-5,6,7,8-tetrahydrofolate is bound at residue K455.

The protein belongs to the TRAFAC class TrmE-Era-EngA-EngB-Septin-like GTPase superfamily. TrmE GTPase family. In terms of assembly, homodimer. Heterotetramer of two MnmE and two MnmG subunits. It depends on K(+) as a cofactor.

Its subcellular location is the cytoplasm. Functionally, exhibits a very high intrinsic GTPase hydrolysis rate. Involved in the addition of a carboxymethylaminomethyl (cmnm) group at the wobble position (U34) of certain tRNAs, forming tRNA-cmnm(5)s(2)U34. The polypeptide is tRNA modification GTPase MnmE (Pseudomonas aeruginosa (strain ATCC 15692 / DSM 22644 / CIP 104116 / JCM 14847 / LMG 12228 / 1C / PRS 101 / PAO1)).